We begin with the raw amino-acid sequence, 181 residues long: Heavy metal-associated isoprenylated plant protein 46 (181 aa).

The HMA domain maps to 2 to 71 (KQKILIRVTM…KVAFAELVSV (70 aa)). Residues 74-121 (VEPPKKEDEKKGGDGKGAEGKGGDQKGGDKKGPDDKEPPEPKPVPCYP) form a disordered region. A compositionally biased stretch (basic and acidic residues) spans 75-113 (EPPKKEDEKKGGDGKGAEGKGGDQKGGDKKGPDDKEPPE). Residue cysteine 178 is modified to Cysteine methyl ester. A lipid anchor (S-farnesyl cysteine) is attached at cysteine 178. Residues 179-181 (KIM) constitute a propeptide, removed in mature form.

It belongs to the HIPP family.

Probable heavy-metal-binding protein. In Arabidopsis thaliana (Mouse-ear cress), this protein is Heavy metal-associated isoprenylated plant protein 46.